A 538-amino-acid chain; its full sequence is Cytochrome P450 monooxygenase xanG (538 aa).

Residues 44–64 (MILYYLASIPLAIICYLAWYL) traverse the membrane as a helical segment. N-linked (GlcNAc...) asparagine glycosylation is present at Asn378. Heme is bound at residue Cys489.

It belongs to the cytochrome P450 family. Heme is required as a cofactor.

It is found in the membrane. The protein operates within secondary metabolite biosynthesis. Its function is as follows. Cytochrome P450 monooxygenase; part of the gene cluster that mediates the biosynthesis of the isocyanide xanthocillin and its derivatives. The first step of the pathway consists in the conversion of tyrosine into a vinyl-isonitrile intermediate by the isocyanide synthase xanB. Subsequent oxidative dimerization of this intermediate to form xanthocillin may involve the cytochrome P450 monooxygenase xanG, whose expression is coregulated with that of XanB. Xanthocillin can be further modified by the isonitrile hydratase-like protein xanA which introduces N-formyl groups and the methyltransferase xanE which introduces methyl groups, leading to the production of several derivatives including fumiformamide. Finally, fumiformamide can be subject to both oxidative and reductive cyclization to yield melanocins E and F, respectively. This chain is Cytochrome P450 monooxygenase xanG, found in Aspergillus fumigatus (strain ATCC MYA-4609 / CBS 101355 / FGSC A1100 / Af293) (Neosartorya fumigata).